A 302-amino-acid polypeptide reads, in one-letter code: Vomeronasal type-1 receptor 48 (302 aa).

Residues 1-16 (MNENSRLHTHSNIRNT) lie on the Extracellular side of the membrane. A helical transmembrane segment spans residues 17 to 37 (FFSEIGIGISGNSFLLLFHII). Topologically, residues 38–49 (KFFRGHRPRLTD) are cytoplasmic. Residues 50 to 70 (LPIGLLSLIHLLMLLVAAVIA) form a helical membrane-spanning segment. Over 71–91 (TDIFISWRGWNDIICKFLVYL) the chain is Extracellular. Cysteine 85 and cysteine 172 are joined by a disulfide. A helical transmembrane segment spans residues 92–114 (YRSLRGLSLCTTSMLSVLQAIIL). Residues 115-131 (SPRSYCLAKFKRKSSHN) lie on the Cytoplasmic side of the membrane. Residues 132-152 (ISCAIIFLSVLYMSISSHLLI) traverse the membrane as a helical segment. The Extracellular portion of the chain corresponds to 153–193 (SITATPNLTMNDFLYVSQSCSLLPLSYLMQSIYSTLLVLRE). N-linked (GlcNAc...) asparagine glycosylation occurs at asparagine 159. A helical membrane pass occupies residues 194–214 (VFLIGLMVLSTSYMVALLYMH). Topologically, residues 215–238 (RKQAQNLQGTSLSLKASAEQRATQ) are cytoplasmic. A helical transmembrane segment spans residues 239–259 (TILMLMTFFVLMSIFDSIVSC). Residues 260-269 (SRTMFLDDPT) are Extracellular-facing. A helical transmembrane segment spans residues 270 to 290 (SYSIHIFVMHIYATVSPFVFI). Over 291-302 (STEKHIVNILRG) the chain is Cytoplasmic.

Belongs to the G-protein coupled receptor 1 family.

It localises to the cell membrane. In terms of biological role, putative pheromone receptor implicated in the regulation of social and reproductive behavior. This Mus musculus (Mouse) protein is Vomeronasal type-1 receptor 48 (Vmn1r48).